The primary structure comprises 109 residues: Aquaporin-2 (109 aa).

The Cytoplasmic portion of the chain corresponds to Ser1–Arg6. Residues Ala7 to Leu27 form a helical membrane-spanning segment. Residues Asn28–Ser35 lie on the Extracellular side of the membrane. A helical transmembrane segment spans residues Val36–Leu54. Residues Gly55–Gly59 are Cytoplasmic-facing. An intramembrane region (discontinuously helical) is located at residues Ala60–Ala69. The NPA 1 motif lies at Asn63–Ala65. Residues Cys70–Arg80 lie on the Cytoplasmic side of the membrane. The helical transmembrane segment at Ala81–Ile102 threads the bilayer. Residues Thr103–Arg109 lie on the Extracellular side of the membrane.

This sequence belongs to the MIP/aquaporin (TC 1.A.8) family. Homotetramer. In terms of processing, serine phosphorylation is necessary and sufficient for expression at the apical membrane. Endocytosis is not phosphorylation-dependent. N-glycosylated.

It is found in the apical cell membrane. Its subcellular location is the basolateral cell membrane. The protein localises to the cell membrane. It localises to the cytoplasmic vesicle membrane. The protein resides in the golgi apparatus. It is found in the trans-Golgi network membrane. The enzyme catalyses H2O(in) = H2O(out). It catalyses the reaction glycerol(in) = glycerol(out). Its function is as follows. Forms a water-specific channel that provides the plasma membranes of renal collecting duct with high permeability to water, thereby permitting water to move in the direction of an osmotic gradient. Plays an essential role in renal water homeostasis. Could also be permeable to glycerol. The protein is Aquaporin-2 of Equus caballus (Horse).